Consider the following 1154-residue polypeptide: CRISPR-associated endoribonuclease Cas13a (1154 aa).

2 HEPN-like fold regions span residues T330–N466 and F923–K1154.

The protein belongs to the CRISPR-associated endoribonuclease Cas13a family. A divalent metal cation is required as a cofactor.

Its activity is regulated as follows. Target RNA acts as an activator for non-specific ssRNA degradation. CRISPR (clustered regularly interspaced short palindromic repeat), is an adaptive immune system that provides protection against mobile genetic elements (viruses, transposable elements and conjugative plasmids). CRISPR clusters contain sequences complementary to antecedent mobile elements and target invading nucleic acids. Unlike many single-component effectors, this CRISPR-Cas system targets RNA. CRISPR clusters are transcribed from pre-CRISPR RNA (crRNA) and processed into crRNA by this protein. Cleaves linear target ssRNA in a pre-crRNA-dependent fashion, preferentially before U residues. Binding a viable target RNA target activates this protein for non-specific RNA degradation in vitro (called collateral RNA degradation), which is fairly sensitive as it requires picomolar levels of viable target RNA. In Paludibacter propionicigenes (strain DSM 17365 / JCM 13257 / WB4), this protein is CRISPR-associated endoribonuclease Cas13a.